A 735-amino-acid chain; its full sequence is MRLWTMSLADTTEAHTNEHFPSLALGSNKKSTEGKRSPGAGGQSQNSQASNGSVDYSRSQCSCTSLTSHYDYSEDFLSDCSETAVRRLQSEKPLAKAKEKRKYNAGKLPQPRGQKDIPAEKKQFWNASLISSQIQTIAKRRDTMTHRILSARLHKIKELKNELADVHRKLEASAIENQFLKQLQLRHLKAIGKYVNSQNNLPQITAKHQNEVKNLRQLLRKSQEKERAVSRKLRETDGELLRTKDVLQALQRLSEDKNLAEREELTDRLTDLTAKMEANDKKIQNLEKQLRLNNRSYSRQLAKENRKTLAAQTATKTLQAEVRQLQQKLKEKDRELEIKNIYTNRILKNLNDKEDYPKVSSTKSVQADRKSLPSVNMRHQETQKSDVPFWITKGKRGKGNIAHKEKSTETNHDIPYYVCKLPKQEESKRKYEANLTVLKSMPSPPASWGLVATEQICAFHLECHSCTHTADLSKEVEHRKPQTSLETPRRPKENKEDQEKRAIPAEAEPTAKESEAHKDAEDKALTRAAGNAGDAGDAGDAGNDREVVGEHKVVGAQEVVGAQELPGADEADEVHGAGEAPRDVEPGRGRRKTPRKHYSFTEATENLHHGLPTSCRQVSGSPHCRCRHDMGKHRSEQELRLEPAGYEPSFGKGAGARARARARATAFRDRKSSLMEELFGAGFAGRAGSSDSEAVSKSPQTGPQASAGNAFGDSRATVAGSIQASPTEANRKTVV.

2 disordered regions span residues 12–54 and 91–115; these read TEAH…NGSV and EKPLAKAKEKRKYNAGKLPQPRGQK. Residues 43–53 are compositionally biased toward low complexity; sequence QSQNSQASNGS. Residues 205-335 are a coiled coil; sequence TAKHQNEVKN…QQKLKEKDRE (131 aa). Disordered stretches follow at residues 356 to 379, 473 to 597, 632 to 657, and 685 to 735; these read YPKVSSTKSVQADRKSLPSVNMRH, SKEV…PRKH, KHRSEQELRLEPAGYEPSFGKGAGAR, and GRAG…KTVV. Residues 487–525 show a composition bias toward basic and acidic residues; sequence TPRRPKENKEDQEKRAIPAEAEPTAKESEAHKDAEDKAL. The span at 528–541 shows a compositional bias: low complexity; the sequence is AAGNAGDAGDAGDA. Composition is skewed to basic and acidic residues over residues 542–553, 573–588, and 632–641; these read GNDREVVGEHKV, EVHGAGEAPRDVEPGR, and KHRSEQELRL. Residues 689–707 show a composition bias toward polar residues; that stretch reads SSDSEAVSKSPQTGPQASA.

The protein belongs to the LCA5 family.

In Mus musculus (Mouse), this protein is Lebercilin-like protein.